A 38-amino-acid polypeptide reads, in one-letter code: Large ribosomal subunit protein bL36 (38 aa).

Belongs to the bacterial ribosomal protein bL36 family.

In Stutzerimonas stutzeri (strain A1501) (Pseudomonas stutzeri), this protein is Large ribosomal subunit protein bL36.